The sequence spans 1082 residues: Putative white-brown complex homolog protein 30 (1082 aa).

2 consecutive transmembrane segments (helical) span residues 12-32 (HIFL…SLDG) and 292-312 (NIHA…IMVY). The span at 329–348 (SREAAARHAKETTQARERWK) shows a compositional bias: basic and acidic residues. The tract at residues 329–437 (SREAAARHAK…QAPKGKQLHT (109 aa)) is disordered. The 243-residue stretch at 484–726 (VAFKDLTLTL…FADIGITVPD (243 aa)) folds into the ABC transporter domain. Residue 518 to 525 (GPSGAGKT) participates in ATP binding. The 198-residue stretch at 832–1029 (RQYRYFVGRV…TLEAFVLSNA (198 aa)) folds into the ABC transmembrane type-2 domain. A run of 5 helical transmembrane segments spans residues 853 to 873 (ALDF…AKVN), 877 to 897 (IDTL…KISA), 958 to 978 (YIVL…FAIL), 979 to 999 (YSPS…TLIA), and 1054 to 1074 (WILC…IAYF).

Belongs to the ABC transporter superfamily. ABCG family. Eye pigment precursor importer (TC 3.A.1.204) subfamily.

The protein localises to the membrane. This chain is Putative white-brown complex homolog protein 30 (WBC30), found in Arabidopsis thaliana (Mouse-ear cress).